Reading from the N-terminus, the 373-residue chain is RNA 3'-terminal phosphate cyclase-like protein (373 aa).

The protein belongs to the RNA 3'-terminal cyclase family. Type 2 subfamily. As to quaternary structure, part of the small subunit (SSU) processome, composed of more than 70 proteins and the RNA chaperone small nucleolar RNA (snoRNA) U3. Interacts with BMS1.

The protein localises to the nucleus. It localises to the nucleolus. Its function is as follows. As part of the small subunit (SSU) processome, it plays a role in 40S-ribosomal-subunit biogenesis in the early pre-rRNA processing steps at sites A0, A1 and A2 that are required for proper maturation of the 18S RNA. Activates BMS1 by promoting GDP/GTP exchange. Does not have cyclase activity. This Homo sapiens (Human) protein is RNA 3'-terminal phosphate cyclase-like protein.